Consider the following 572-residue polypeptide: Formate--tetrahydrofolate ligase (572 aa).

Position 65–72 (65–72 (TPLGEGKT)) interacts with ATP.

It belongs to the formate--tetrahydrofolate ligase family.

The enzyme catalyses (6S)-5,6,7,8-tetrahydrofolate + formate + ATP = (6R)-10-formyltetrahydrofolate + ADP + phosphate. It functions in the pathway one-carbon metabolism; tetrahydrofolate interconversion. The protein is Formate--tetrahydrofolate ligase of Chloroflexus aurantiacus (strain ATCC 29366 / DSM 635 / J-10-fl).